A 296-amino-acid polypeptide reads, in one-letter code: MRLLIGFALALALIGCAQKGAESIGSQKENDLNLEDSSKKSHQNAKQDLPAVTEDSVSLFNGNKIFVSKEKNSSGKYDLRATIDQVELKGTSDKNNGSGTLEGSKPDKSKVKLTVSADLNTVTLEAFDASNQKISSKVTKKQGSITEETLKANKLDSKKLTRSNGTTLEYSQITDADNATKAVETLKNSIKLEGSLVGGKTTVEIKEGTVTLKREIEKDGKVKVFLNDTAGSNKKTGKWEDSTSTLTISADSKKTKDLVFLTDGTITVQQYNTAGTSLEGSASEIKNLSELKNALK.

An N-terminal signal peptide occupies residues methionine 1 to glycine 15. Residue cysteine 16 is the site of N-palmitoyl cysteine attachment. A lipid anchor (S-diacylglycerol cysteine) is attached at cysteine 16. Positions glycine 25–alanine 51 are disordered. Positions lysine 28 to lysine 39 are enriched in basic and acidic residues.

The protein localises to the cell outer membrane. The protein is Outer surface protein B (ospB) of Borreliella burgdorferi (strain ATCC 35210 / DSM 4680 / CIP 102532 / B31) (Borrelia burgdorferi).